We begin with the raw amino-acid sequence, 331 residues long: Ketol-acid reductoisomerase (NADP(+)) (331 aa).

The KARI N-terminal Rossmann domain occupies 2 to 182; sequence AQLFYDSDAD…GGTRAGILET (181 aa). NADP(+) contacts are provided by residues 25-28, Ser-51, Ser-53, and 83-86; these read YGSQ and DEFQ. The active site involves His-108. NADP(+) is bound at residue Gly-134. A KARI C-terminal knotted domain is found at 183–328; sequence NFKEETETDL…KGLRAMFSWL (146 aa). Residues Asp-191, Glu-195, Glu-227, and Glu-231 each coordinate Mg(2+). Ser-252 contributes to the substrate binding site.

This sequence belongs to the ketol-acid reductoisomerase family. Requires Mg(2+) as cofactor.

It carries out the reaction (2R)-2,3-dihydroxy-3-methylbutanoate + NADP(+) = (2S)-2-acetolactate + NADPH + H(+). It catalyses the reaction (2R,3R)-2,3-dihydroxy-3-methylpentanoate + NADP(+) = (S)-2-ethyl-2-hydroxy-3-oxobutanoate + NADPH + H(+). It participates in amino-acid biosynthesis; L-isoleucine biosynthesis; L-isoleucine from 2-oxobutanoate: step 2/4. Its pathway is amino-acid biosynthesis; L-valine biosynthesis; L-valine from pyruvate: step 2/4. Its function is as follows. Involved in the biosynthesis of branched-chain amino acids (BCAA). Catalyzes an alkyl-migration followed by a ketol-acid reduction of (S)-2-acetolactate (S2AL) to yield (R)-2,3-dihydroxy-isovalerate. In the isomerase reaction, S2AL is rearranged via a Mg-dependent methyl migration to produce 3-hydroxy-3-methyl-2-ketobutyrate (HMKB). In the reductase reaction, this 2-ketoacid undergoes a metal-dependent reduction by NADPH to yield (R)-2,3-dihydroxy-isovalerate. The chain is Ketol-acid reductoisomerase (NADP(+)) from Prochlorococcus marinus (strain MIT 9313).